Here is a 329-residue protein sequence, read N- to C-terminus: Protoheme IX farnesyltransferase (329 aa).

A run of 7 helical transmembrane segments spans residues 61–81, 108–128, 130–150, 158–178, 186–206, 243–263, and 284–304; these read LACT…LNCL, AFLI…AGVN, LAAG…TIVL, IVIG…AATG, WLFG…ALLL, LLGV…VLPF, and AKGL…LLLL.

It belongs to the UbiA prenyltransferase family. Protoheme IX farnesyltransferase subfamily.

It localises to the cell inner membrane. The catalysed reaction is heme b + (2E,6E)-farnesyl diphosphate + H2O = Fe(II)-heme o + diphosphate. The protein operates within porphyrin-containing compound metabolism; heme O biosynthesis; heme O from protoheme: step 1/1. Functionally, converts heme B (protoheme IX) to heme O by substitution of the vinyl group on carbon 2 of heme B porphyrin ring with a hydroxyethyl farnesyl side group. This Synechococcus sp. (strain RCC307) protein is Protoheme IX farnesyltransferase.